Consider the following 498-residue polypeptide: ATP synthase subunit beta, chloroplastic (498 aa).

Residue 172-179 (GGAGVGKT) participates in ATP binding.

Belongs to the ATPase alpha/beta chains family. In terms of assembly, F-type ATPases have 2 components, CF(1) - the catalytic core - and CF(0) - the membrane proton channel. CF(1) has five subunits: alpha(3), beta(3), gamma(1), delta(1), epsilon(1). CF(0) has four main subunits: a(1), b(1), b'(1) and c(9-12).

It is found in the plastid. The protein resides in the chloroplast thylakoid membrane. The enzyme catalyses ATP + H2O + 4 H(+)(in) = ADP + phosphate + 5 H(+)(out). Produces ATP from ADP in the presence of a proton gradient across the membrane. The catalytic sites are hosted primarily by the beta subunits. The protein is ATP synthase subunit beta, chloroplastic of Salacca zalacca (Snake palm).